A 305-amino-acid chain; its full sequence is Oligopeptide transport ATP-binding protein OppF (305 aa).

An ABC transporter domain is found at 6 to 251 (LEIKHLKQHF…PLHPYTKSLL (246 aa)). 42–49 (GESGCGKS) provides a ligand contact to ATP.

This sequence belongs to the ABC transporter superfamily. As to quaternary structure, the complex is composed of two ATP-binding proteins (OppD and OppF), two transmembrane proteins (OppB and OppC) and a solute-binding protein (OppA).

The protein resides in the cell membrane. The enzyme catalyses a [peptide](out) + ATP + H2O = a [peptide](in) + ADP + phosphate + H(+). Its function is as follows. Part of the ABC transporter complex OppABCDF involved in the uptake of oligopeptides. Probably responsible for energy coupling to the transport system. Required for genetic competence but not for peptide transport or for sporulation. This Bacillus subtilis (strain 168) protein is Oligopeptide transport ATP-binding protein OppF.